The primary structure comprises 368 residues: RING finger protein 32 (368 aa).

The disordered stretch occupies residues Arg45–Tyr82. Residues Cys129–Arg171 form an RING-type 1; atypical zinc finger. In terms of domain architecture, IQ spans Arg188–Pro217. The RING-type 2; atypical zinc finger occupies Cys295–Arg358.

Its subcellular location is the cytoplasm. May play a role in sperm formation. The chain is RING finger protein 32 (Rnf32) from Mus musculus (Mouse).